The following is a 357-amino-acid chain: Phosphoribosylformylglycinamidine cyclo-ligase (357 aa).

Belongs to the AIR synthase family.

It localises to the cytoplasm. It catalyses the reaction 2-formamido-N(1)-(5-O-phospho-beta-D-ribosyl)acetamidine + ATP = 5-amino-1-(5-phospho-beta-D-ribosyl)imidazole + ADP + phosphate + H(+). It participates in purine metabolism; IMP biosynthesis via de novo pathway; 5-amino-1-(5-phospho-D-ribosyl)imidazole from N(2)-formyl-N(1)-(5-phospho-D-ribosyl)glycinamide: step 2/2. This chain is Phosphoribosylformylglycinamidine cyclo-ligase, found in Rhizobium etli (strain ATCC 51251 / DSM 11541 / JCM 21823 / NBRC 15573 / CFN 42).